The following is a 511-amino-acid chain: MQKIIEINGSNLTIEDVVAVARYGAKVKLDEKQKDKILESRKYVEEALSNKMPIYGINTGFGKFENVPISEEELELLQKNLIYSDACGVGEAFDTEIVRAMMILRANAISKGFSGVMIETVECLLNMLNAGVHPIVRSKGSVGSSGDLCPLAHMVLPMIGEGEAEYKGEILSGKEAMKKAGVSTITLKAKEGLALINGTQAMMGNAVLAVYDAEKLLKQADIVASLSIDALGGIIDAFDERIHLIRPHKGQIYSAENLRKLLKGSKRTTRQGEKRMQDAYSLRCTPQVHGASRLAFDYVKQTVETEINSVTDNPLIFPGENGACISGGNFHGQPIAIAMDTLGILMSEIANISERRIEKLVNPALSHGLPAFLVKNGGINDGFMIPQYVAAALVSENKVLAHPASVDSIPTSANQEDHVSMGTIGARKARTIVDHAQHVVSIELLCAAQAADFWDSKNLGVGTKEAYRTLREKVDFMENDVIFYPLMDKSFEIIKSAILLANVEKIIGLLK.

Positions Ser144–Gly146 form a cross-link, 5-imidazolinone (Ser-Gly). Ser145 carries the 2,3-didehydroalanine (Ser) modification.

Belongs to the PAL/histidase family. In terms of processing, contains an active site 4-methylidene-imidazol-5-one (MIO), which is formed autocatalytically by cyclization and dehydration of residues Ser-Ser-Gly.

Its subcellular location is the cytoplasm. It catalyses the reaction L-histidine = trans-urocanate + NH4(+). It functions in the pathway amino-acid degradation; L-histidine degradation into L-glutamate; N-formimidoyl-L-glutamate from L-histidine: step 1/3. In Fusobacterium nucleatum subsp. nucleatum (strain ATCC 25586 / DSM 15643 / BCRC 10681 / CIP 101130 / JCM 8532 / KCTC 2640 / LMG 13131 / VPI 4355), this protein is Histidine ammonia-lyase 2 (hutH2).